A 669-amino-acid polypeptide reads, in one-letter code: Thrombospondin-type laminin G domain and EAR repeat-containing protein (669 aa).

The N-terminal stretch at 1-19 is a signal peptide; it reads MSALLSLCFVLPLAAPGHG. A Laminin G-like domain is found at 58–277; the sequence is GLQLSVAAPR…RVTLGPQPPC (220 aa). EAR repeat units follow at residues 313-358, 360-408, 412-460, 464-506, 514-570, 574-622, and 625-668; these read DYVE…KWTE, KFVS…KWSH, KFTP…KWNP, LFEA…VHSH, SFQL…ELNV, AFVK…RWQG, and GFVA…RLRT. Asn320 carries an N-linked (GlcNAc...) asparagine glycan. 4 N-linked (GlcNAc...) asparagine glycosylation sites follow: Asn468, Asn497, Asn556, and Asn569.

It is found in the secreted. It localises to the cell surface. The protein localises to the cell projection. The protein resides in the stereocilium. Its function is as follows. Plays a critical role in tooth and hair follicle morphogenesis through regulation of the Notch signaling pathway. May play a role in development or function of the auditory system. This Homo sapiens (Human) protein is Thrombospondin-type laminin G domain and EAR repeat-containing protein (TSPEAR).